The primary structure comprises 433 residues: Delta-aminolevulinic acid dehydratase, chloroplastic (433 aa).

The transit peptide at 1-56 (MASTFNIPCNAGTIKNFNNSQRNLGFSSNLGINFAKTRFSNCGDSGRIPSQLVVRA) directs the protein to the chloroplast. The tract at residues 83–115 (NAPSAPPVPPTPKAPSGTPSVSPLSLGRRPRRN) is disordered. Pro residues predominate over residues 86–95 (SAPPVPPTPK). Catalysis depends on Lys301, which acts as the Schiff-base intermediate with substrate. Positions 311 and 323 each coordinate 5-aminolevulinate. A Mg(2+)-binding site is contributed by Glu339. The active-site Schiff-base intermediate with substrate is Lys354. Positions 380 and 419 each coordinate 5-aminolevulinate.

It belongs to the ALAD family. In terms of assembly, homooctamer. The cofactor is Mg(2+).

It localises to the plastid. The protein resides in the chloroplast. It carries out the reaction 2 5-aminolevulinate = porphobilinogen + 2 H2O + H(+). It functions in the pathway porphyrin-containing compound metabolism; protoporphyrin-IX biosynthesis; coproporphyrinogen-III from 5-aminolevulinate: step 1/4. Functionally, catalyzes an early step in the biosynthesis of tetrapyrroles. Binds two molecules of 5-aminolevulinate per subunit, each at a distinct site, and catalyzes their condensation to form porphobilinogen. The chain is Delta-aminolevulinic acid dehydratase, chloroplastic (HEMB) from Spinacia oleracea (Spinach).